Here is a 101-residue protein sequence, read N- to C-terminus: U-scoloptoxin(10)-Sm2a (101 aa).

Positions 1–23 (MNKSMIILCAVLFLTYIIEENEA) are cleaved as a signal peptide.

The protein belongs to the scoloptoxin-10 family. In terms of processing, contains 3 disulfide bonds. As to expression, expressed by the venom gland.

It localises to the secreted. This is U-scoloptoxin(10)-Sm2a from Scolopendra morsitans (Tanzanian blue ringleg centipede).